The chain runs to 170 residues: Adenine phosphoribosyltransferase (170 aa).

Belongs to the purine/pyrimidine phosphoribosyltransferase family. Homodimer.

It localises to the cytoplasm. It carries out the reaction AMP + diphosphate = 5-phospho-alpha-D-ribose 1-diphosphate + adenine. Its pathway is purine metabolism; AMP biosynthesis via salvage pathway; AMP from adenine: step 1/1. Catalyzes a salvage reaction resulting in the formation of AMP, that is energically less costly than de novo synthesis. In Streptococcus suis (strain 98HAH33), this protein is Adenine phosphoribosyltransferase.